Consider the following 243-residue polypeptide: MSNGRHLAKGSPMPDVPEDGILRLYSMRFCPFAQRVHLVLDAKQIPYHSIYINLTDKPEWLLEKNPQGKVPALEIVREPGPPVLTESLLICEYLDEQYPLRPLYPRDPLKKVQDKLLIERFRAVLGAFFKASDGGDLEPFWSGLDIYERELARRGTEFFGGEQTGILDYMIWPWCERLELLKLQRGEDYNYDQSRFPQLTLWLERMKRDPAVMAFYMEAEVQAEFLRTRSLGRPNYNLLVKDA.

Residues 20–102 (GILRLYSMRF…YLDEQYPLRP (83 aa)) form the GST N-terminal domain. Residue C30 is the Nucleophile of the active site. Residues K57, V70, and 86–87 (ES) contribute to the glutathione site. Positions 107-230 (DPLKKVQDKL…VQAEFLRTRS (124 aa)) constitute a GST C-terminal domain.

This sequence belongs to the GST superfamily. Omega family. Homodimer.

The enzyme catalyses 2-amino-6-acetyl-3,7,8,9-tetrahydro-3H-pyrimido[4,5-b][1,4]diazepin-4-one + glutathione disulfide + H2O = 6-pyruvoyl-5,6,7,8-tetrahydropterin + 2 glutathione. In terms of biological role, mediates the conversion of 2-amino-4-oxo-6-pyruvoyl-5,6,7,8-tetrahydropteridine (6-PTP; also named 6-pyruvoyltetrahydropterin) to 2-amino-6-acetyl-3,7,8,9-tetrahydro-3H-pyrimido(4,5-b)[1,4]diazepin-4-one (pyrimidodiazepine or PDA), a key intermediate in red eye pigment drosopterin biosynthesis. The chain is Pyrimidodiazepine synthase from Drosophila melanogaster (Fruit fly).